A 215-amino-acid chain; its full sequence is Pyridoxine/pyridoxamine 5'-phosphate oxidase (215 aa).

Substrate-binding positions include 11 to 14 (RRDY) and Lys69. Residues 64 to 69 (RVVLLK), 79 to 80 (YT), Lys86, and Gln108 each bind FMN. 3 residues coordinate substrate: Tyr126, Arg130, and Ser134. FMN-binding positions include 143–144 (QS) and Trp188. Residue 194–196 (RLH) participates in substrate binding. Residue Arg198 participates in FMN binding.

It belongs to the pyridoxamine 5'-phosphate oxidase family. As to quaternary structure, homodimer. FMN is required as a cofactor.

The enzyme catalyses pyridoxamine 5'-phosphate + O2 + H2O = pyridoxal 5'-phosphate + H2O2 + NH4(+). It carries out the reaction pyridoxine 5'-phosphate + O2 = pyridoxal 5'-phosphate + H2O2. It participates in cofactor metabolism; pyridoxal 5'-phosphate salvage; pyridoxal 5'-phosphate from pyridoxamine 5'-phosphate: step 1/1. It functions in the pathway cofactor metabolism; pyridoxal 5'-phosphate salvage; pyridoxal 5'-phosphate from pyridoxine 5'-phosphate: step 1/1. Its function is as follows. Catalyzes the oxidation of either pyridoxine 5'-phosphate (PNP) or pyridoxamine 5'-phosphate (PMP) into pyridoxal 5'-phosphate (PLP). The polypeptide is Pyridoxine/pyridoxamine 5'-phosphate oxidase (Legionella pneumophila (strain Paris)).